The primary structure comprises 120 residues: Large ribosomal subunit protein bL19 (120 aa).

Belongs to the bacterial ribosomal protein bL19 family.

This protein is located at the 30S-50S ribosomal subunit interface and may play a role in the structure and function of the aminoacyl-tRNA binding site. The polypeptide is Large ribosomal subunit protein bL19 (Gloeothece citriformis (strain PCC 7424) (Cyanothece sp. (strain PCC 7424))).